A 185-amino-acid polypeptide reads, in one-letter code: Ribosome-recycling factor (185 aa).

It belongs to the RRF family.

Its subcellular location is the cytoplasm. Its function is as follows. Responsible for the release of ribosomes from messenger RNA at the termination of protein biosynthesis. May increase the efficiency of translation by recycling ribosomes from one round of translation to another. The protein is Ribosome-recycling factor of Campylobacter fetus subsp. fetus (strain 82-40).